Consider the following 92-residue polypeptide: Progonadoliberin-1 (92 aa).

The signal sequence occupies residues 1–23 (MELVPKFLAGLILLTLCVGGCYA). A Pyrrolidone carboxylic acid modification is found at Q24. Residue G33 is modified to Glycine amide.

Belongs to the GnRH family.

The protein resides in the secreted. Stimulates the secretion of gonadotropins; it stimulates the secretion of both luteinizing and follicle-stimulating hormones. This chain is Progonadoliberin-1 (GNRH1), found in Tupaia belangeri (Common tree shrew).